The chain runs to 130 residues: Small ribosomal subunit protein uS13 (130 aa).

A compositionally biased stretch (basic residues) spans 97–116 (PVRGQRTKTNARTRRGKRKT). Residues 97-130 (PVRGQRTKTNARTRRGKRKTVGAGKSTSSIKRVK) are disordered. Positions 121 to 130 (KSTSSIKRVK) are enriched in polar residues.

This sequence belongs to the universal ribosomal protein uS13 family. As to quaternary structure, part of the 30S ribosomal subunit. Forms a loose heterodimer with protein S19. Forms two bridges to the 50S subunit in the 70S ribosome.

Its function is as follows. Located at the top of the head of the 30S subunit, it contacts several helices of the 16S rRNA. In the 70S ribosome it contacts the 23S rRNA (bridge B1a) and protein L5 of the 50S subunit (bridge B1b), connecting the 2 subunits; these bridges are implicated in subunit movement. Contacts the tRNAs in the A and P-sites. The chain is Small ribosomal subunit protein uS13 from Endomicrobium trichonymphae.